We begin with the raw amino-acid sequence, 439 residues long: Tol-Pal system protein TolB (439 aa).

The N-terminal stretch at 1–21 (MRFRLALSLLSLALFAAPAAA) is a signal peptide.

The protein belongs to the TolB family. In terms of assembly, the Tol-Pal system is composed of five core proteins: the inner membrane proteins TolA, TolQ and TolR, the periplasmic protein TolB and the outer membrane protein Pal. They form a network linking the inner and outer membranes and the peptidoglycan layer.

It localises to the periplasm. In terms of biological role, part of the Tol-Pal system, which plays a role in outer membrane invagination during cell division and is important for maintaining outer membrane integrity. The chain is Tol-Pal system protein TolB from Rhizorhabdus wittichii (strain DSM 6014 / CCUG 31198 / JCM 15750 / NBRC 105917 / EY 4224 / RW1) (Sphingomonas wittichii).